The sequence spans 182 residues: Endoribonuclease YbeY (182 aa).

Zn(2+) is bound by residues H115, H119, and H125.

It belongs to the endoribonuclease YbeY family. It depends on Zn(2+) as a cofactor.

It localises to the cytoplasm. In terms of biological role, single strand-specific metallo-endoribonuclease involved in late-stage 70S ribosome quality control and in maturation of the 3' terminus of the 16S rRNA. In Bifidobacterium longum (strain NCC 2705), this protein is Endoribonuclease YbeY.